The following is a 214-amino-acid chain: Sugar fermentation stimulation protein homolog (214 aa).

Belongs to the SfsA family.

The polypeptide is Sugar fermentation stimulation protein homolog (Aquifex aeolicus (strain VF5)).